A 318-amino-acid polypeptide reads, in one-letter code: Ribose-phosphate pyrophosphokinase (318 aa).

ATP-binding positions include 43–45 (DGE) and 102–103 (RQ). His-136 and Asp-176 together coordinate Mg(2+). The active site involves Lys-199. Residues Arg-201, Asp-225, and 229-233 (DTAGT) contribute to the D-ribose 5-phosphate site.

The protein belongs to the ribose-phosphate pyrophosphokinase family. Class I subfamily. As to quaternary structure, homohexamer. Requires Mg(2+) as cofactor.

It localises to the cytoplasm. It catalyses the reaction D-ribose 5-phosphate + ATP = 5-phospho-alpha-D-ribose 1-diphosphate + AMP + H(+). It participates in metabolic intermediate biosynthesis; 5-phospho-alpha-D-ribose 1-diphosphate biosynthesis; 5-phospho-alpha-D-ribose 1-diphosphate from D-ribose 5-phosphate (route I): step 1/1. Involved in the biosynthesis of the central metabolite phospho-alpha-D-ribosyl-1-pyrophosphate (PRPP) via the transfer of pyrophosphoryl group from ATP to 1-hydroxyl of ribose-5-phosphate (Rib-5-P). This is Ribose-phosphate pyrophosphokinase from Listeria ivanovii.